The primary structure comprises 298 residues: MVFGQVVIGPPGSGKTTYCNGMSQFLSLMGRKVAIVNLDPANDALPYECGVNIEELIKLEDVMSEHSLGPNGGLVYCMEYLEKNIDWLESKLKPLLKDHYILFDFPGQVELFFIHDSTKNVLTKLIKSLNLRLTAVQLIDSHLCCDPGNYVSSLLLSLSTMLHMELPHVNVLSKIDLIGSYGKLAFNLDFYTDVQDLSYLEHHLSQDPRSAKYRKLTKELCSVIEDYSLVNFTTLDIQDKESVGDLVKLIDKSNGYIFAGIDASVVEYSKIAIGQTDWDYNRVAAVQEKYMEDEEIQD.

GTP is bound at residue 12–17 (GSGKTT). Residues 69-71 (GPN) carry the Gly-Pro-Asn (GPN)-loop; involved in dimer interface motif. 173–176 (SKID) lines the GTP pocket.

This sequence belongs to the GPN-loop GTPase family. In terms of assembly, heterodimer with QQT2. In terms of tissue distribution, expressed in vascular tissues, root tips, apical and root meristematic regions, and floral primordia.

It is found in the cytoplasm. It localises to the nucleus. The protein resides in the cytoskeleton. Its subcellular location is the spindle. The protein localises to the phragmoplast. In terms of biological role, small GTPase that is essential for the correct formation of the tangential divisions in early embryos. Associates with microtubule during mitosis and may function in the positioning of the division plane. May participate in the patterning of the early embryo at the octant-dermatogen transition. Is crucial for normal development of the plant. In Arabidopsis thaliana (Mouse-ear cress), this protein is GPN-loop GTPase QQT1.